A 155-amino-acid chain; its full sequence is Ribosome maturation factor RimP (155 aa).

The protein belongs to the RimP family.

The protein localises to the cytoplasm. In terms of biological role, required for maturation of 30S ribosomal subunits. In Staphylococcus saprophyticus subsp. saprophyticus (strain ATCC 15305 / DSM 20229 / NCIMB 8711 / NCTC 7292 / S-41), this protein is Ribosome maturation factor RimP.